Reading from the N-terminus, the 580-residue chain is Mucolipin-1 (580 aa).

The disordered stretch occupies residues 1 to 38 (MTDPAGPRGSETERLLTPNPGYGTQVGPSPAPPTPPEE). Topologically, residues 1–65 (MTDPAGPRGS…FRAKGRKPCK (65 aa)) are cytoplasmic. Position 10 is a phosphoserine (Ser-10). A Dileucine motif; mediates targeting to lysosomes motif is present at residues 11–16 (ETERLL). The interaction with phosphoinositides stretch occupies residues 42–62 (RRRLKYFFMSPCDKFRAKGRK). A helical transmembrane segment spans residues 66-86 (LMLQVVKILVVTVQLILFGLS). Topologically, residues 87–298 (NQLAVTFREE…VFRHGDNSFR (212 aa)) are extracellular. Residues 107–121 (LGYSDGADDTFAAYT) are extracellular/lumenal pore loop. Cysteines 166 and 192 form a disulfide. An N-linked (GlcNAc...) asparagine glycan is attached at Asn-230. The cysteines at positions 253 and 284 are disulfide-linked. Residues 299 to 321 (LLFDVVVILTCSLSFLLCARSLL) form a helical membrane-spanning segment. Topologically, residues 322–350 (RGFLLQNEFVRFMWRQRRRVISLWERLEF) are cytoplasmic. The chain crosses the membrane as a helical span at residues 351-371 (VNGWYILLVTSDVLTISGTIM). The Extracellular segment spans residues 372–382 (KIGIEAKNLAS). A helical membrane pass occupies residues 383–405 (YDVCSILLGTSTLLVWVGVIRYL). The Cytoplasmic portion of the chain corresponds to 406–427 (TFFHNYNILIATLRVALPSVMR). Residues 428-448 (FCCCVAVIYLGYCFCGWIVLG) form a helical membrane-spanning segment. Topologically, residues 449–456 (PYHVKFRS) are extracellular. An intramembrane region (pore-forming) is located at residues 457–477 (LSMVSECLFSLINGDDMFVTF). The Selectivity filter signature appears at 469–474 (NGDDMF). At 478–491 (AAMQAQQGRSSLVW) the chain is on the extracellular side. Residues 492 to 513 (LFSQLYLYSFISLFIYMVLSLF) form a helical membrane-spanning segment. Topologically, residues 514–580 (IALITGAYDT…PSEEHSLLVN (67 aa)) are cytoplasmic. A phosphoserine; by PAK mark is found at Ser-557 and Ser-559. The required for palmitoylation and association with membranes stretch occupies residues 565–567 (CCC). A Dileucine internalization motif; mediates AP2 complex-dependent internalization motif is present at residues 573–578 (EEHSLL).

This sequence belongs to the transient receptor (TC 1.A.4) family. Polycystin subfamily. MCOLN1 sub-subfamily. Homotetramer. Homooligomer. Can heterooligomerize with MCOLN2 or MCOLN3; heteromeric assemblies have different channel properties as compared to the respective homooligomers and may be tissue-specific. Interacts with PDCD6. Interacts with TMEM163. Interacts with LAPTM4B. In terms of processing, palmitoylated; involved in association with membranes. Phosphorylation by PKA inhibits channel activity. Dephosphorylation increases activity. Post-translationally, proteolytically cleaved probably involving multiple lysosomal proteases including cathepsin B; inhibits lysosomal channel activity.

It localises to the late endosome membrane. The protein resides in the lysosome membrane. It is found in the cytoplasmic vesicle membrane. Its subcellular location is the cell projection. The protein localises to the phagocytic cup. It localises to the cytoplasmic vesicle. The protein resides in the phagosome membrane. It is found in the cell membrane. It catalyses the reaction Ca(2+)(in) = Ca(2+)(out). The enzyme catalyses Fe(2+)(in) = Fe(2+)(out). The catalysed reaction is Mg(2+)(in) = Mg(2+)(out). It carries out the reaction K(+)(in) = K(+)(out). It catalyses the reaction Na(+)(in) = Na(+)(out). Its activity is regulated as follows. Channel activity is controlled by multiple regulatory mechanisms in different subcellular compartments. Channel function is transiently modulated by changes in Ca(2+) in a pH-dependent manner; pH changes modify the aggregation state of unitary channels; a negative cooperativity between extracellular/lumenal Ca(2+) and H(+) is suggested. Regulated by phosphoinositides in a compartment-specific manner: in lysosomes activated by PtdIns(3,5)P2 (Phosphatidylinositol 3,5-bisphosphate) and at the plasma membrane inhibited by PtdIns(4,5)P2 (Phosphatidylinositol 4,5-bisphosphate). Its function is as follows. Nonselective cation channel probably playing a role in the regulation of membrane trafficking events and of metal homeostasis. Acts as a Ca(2+)-permeable cation channel with inwardly rectifying activity. Proposed to play a major role in Ca(2+) release from late endosome and lysosome vesicles to the cytoplasm, which is important for many lysosome-dependent cellular events, including the fusion and trafficking of these organelles, exocytosis and autophagy. Required for efficient uptake of large particles in macrophages in which Ca(2+) release from the lysosomes triggers lysosomal exocytosis. May also play a role in phagosome-lysosome fusion. Involved in lactosylceramide trafficking indicative for a role in the regulation of late endocytic membrane fusion/fission events. By mediating lysosomal Ca(2+) release is involved in regulation of mTORC1 signaling and in mTOR/TFEB-dependent lysosomal adaptation to environmental cues such as nutrient levels. Seems to act as lysosomal active oxygen species (ROS) sensor involved in ROS-induced TFEB activation and autophagy. Also functions as a Fe(2+) permeable channel in late endosomes and lysosomes. Also permeable to Mg(2+), Na(+). K(+) and Cs(+). Proposed to play a role in zinc homeostasis probably implicating its association with TMEM163. In adaptive immunity, TRPML2 and TRPML1 may play redundant roles in the function of the specialized lysosomes of B cells. May contribute to cellular lipase activity within the late endosomal pathway or at the cell surface which may be involved in processes of membrane reshaping and vesiculation, especially the growth of tubular structures. However, it is not known, whether it conveys the enzymatic activity directly, or merely facilitates the activity of an associated phospholipase. This is Mucolipin-1 (MCOLN1) from Macaca fascicularis (Crab-eating macaque).